The following is an 883-amino-acid chain: Integrator complex subunit 6-B (883 aa).

Positions 3–227 (ILLFLLDTSA…QCLESLVQKI (225 aa)) constitute a VWFA domain. The Inhibitory loop signature appears at 626–633 (MMIDEADE).

It belongs to the Integrator subunit 6 family. Component of the Integrator complex, composed of core subunits INTS1, INTS2, INTS3, INTS4, INTS5, INTS6, INTS7, INTS8, INTS9/RC74, INTS10, INTS11/CPSF3L, INTS12, INTS13, INTS14 and INTS15. The core complex associates with protein phosphatase 2A subunits PPP2CA and PPP2R1A, to form the Integrator-PP2A (INTAC) complex.

The protein localises to the nucleus. It localises to the chromosome. Functionally, component of the integrator complex, a multiprotein complex that terminates RNA polymerase II (Pol II) transcription in the promoter-proximal region of genes. The integrator complex provides a quality checkpoint during transcription elongation by driving premature transcription termination of transcripts that are unfavorably configured for transcriptional elongation: the complex terminates transcription by (1) catalyzing dephosphorylation of the C-terminal domain (CTD) of Pol II subunit POLR2A/RPB1 and SUPT5H/SPT5, (2) degrading the exiting nascent RNA transcript via endonuclease activity and (3) promoting the release of Pol II from bound DNA. The integrator complex is also involved in terminating the synthesis of non-coding Pol II transcripts, such as enhancer RNAs (eRNAs), small nuclear RNAs (snRNAs), telomerase RNAs and long non-coding RNAs (lncRNAs). Within the integrator complex, INTS6 acts as a molecular adapter that promotes assembly of protein phosphatase 2A (PP2A) subunits to the integrator core complex, promoting recruitment of PP2A to transcription pause-release checkpoint. The chain is Integrator complex subunit 6-B (ints6-b) from Xenopus laevis (African clawed frog).